The following is a 261-amino-acid chain: Glandular kallikrein-7, submandibular/renal (261 aa).

A signal peptide spans Met1–Ala18. A propeptide spans Pro19–Arg24 (activation peptide). A Peptidase S1 domain is found at Val25 to Lys258. Disulfide bonds link Cys31/Cys173, Cys50/Cys66, Cys152/Cys219, Cys184/Cys198, and Cys209/Cys234. His65 acts as the Charge relay system in catalysis. Residue Asn108 is glycosylated (N-linked (GlcNAc...) asparagine). The Charge relay system role is filled by Asp120. Ser213 acts as the Charge relay system in catalysis.

This sequence belongs to the peptidase S1 family. Kallikrein subfamily. As to expression, kidney and submandibular gland. Not expressed in liver, pancreas, spleen, parotid, testis, cortex, prostate, ovary and pituitary.

It catalyses the reaction Preferential cleavage of Arg-|-Xaa bonds in small molecule substrates. Highly selective action to release kallidin (lysyl-bradykinin) from kininogen involves hydrolysis of Met-|-Xaa or Leu-|-Xaa.. Its function is as follows. Glandular kallikreins cleave Met-Lys and Arg-Ser bonds in kininogen to release Lys-bradykinin. Predominant kallikrein protein in the kidney. The protein is Glandular kallikrein-7, submandibular/renal (Klk7) of Rattus norvegicus (Rat).